Consider the following 445-residue polypeptide: MSLAPSVIEPAHEEDAFMDLLATSALDDPLAAARDATADMLRQRQGDHSLPQPFYNDPRVFALEMREIFEHEWLFVGMTCEIPAKGNYLTVQIGDNPIIVVRGDQGTIHAFHNVCRHRGSRLCTQAKGKVAKLVCPYHQWTYELDGRLLFAGQDMGEDFDLGAHGLKPVAVTHAGGFLFVSLADQPPAIDDFLATLDDYLAPYEMDNVKVAAESNIVEQANWKLVIENNRECYHCNGAHPELLNSLIEYDDTDDPRATPAYRDLVARQQAHWEQQQVPWALKRFGKRNRLTRTPMIEGVVSMTMDGRPASQRLMGRLPNPDMGSLRILHLPNSWNHFMGDHAVVFRVLPLGPQQTLVTTKWLVHRDAQEGVDYDPEWMRKVWDATTDQDRQLAEENQRGINSVAYQPGPYSRTYEFGVIDFVDWYSDTMLSRLDAEAPSLHIVQG.

Residues 73–180 (WLFVGMTCEI…VTHAGGFLFV (108 aa)) form the Rieske domain. Residues Cys-115, His-117, Cys-135, and His-138 each contribute to the [2Fe-2S] cluster site. The Fe cation site is built by His-234 and His-239.

This sequence belongs to the bacterial ring-hydroxylating dioxygenase alpha subunit family. Homotrimer. The system is composed of an oxygenase subunit (BmoA) and a reductase subunit (BmoB). Maximal specific activity is obtained when the ratio of BmoA to BmoB is 5:1. The cofactor is [2Fe-2S] cluster. Fe cation serves as cofactor.

The enzyme catalyses glycine betaine + NADH + O2 + H(+) = N,N-dimethylglycine + formaldehyde + NAD(+) + H2O. Activity is absolutely dependent on the presence of BmoB. Glycine betaine monooxygenase activity is significantly enhanced by Fe(2+) and severely inhibited by heavy-metal ions, including Co(2+), Mn(2+), Zn(2+), Cu(2+) and Ag(+). Severely inhibited by EDTA. Involved in degradation of glycine betaine. Part of a Rieske-type oxygenase system that catalyzes the conversion of glycine betaine (GB) to dimethylglycine (DMG). This subunit is the terminal oxygenase component of the system. Is specific for GB, and does not show any activity on choline, L-carnitine, stachydrine, dimethylglycine or sarcosine. Activity is strictly dependent on NADH. This chain is Glycine betaine monooxygenase oxygenase subunit, found in Chromohalobacter salexigens (strain ATCC BAA-138 / DSM 3043 / CIP 106854 / NCIMB 13768 / 1H11).